A 190-amino-acid polypeptide reads, in one-letter code: Acireductone dioxygenase (190 aa).

The Fe(2+) site is built by His101, His103, Glu107, and His145. Residues His101, His103, Glu107, and His145 each contribute to the Ni(2+) site.

Belongs to the acireductone dioxygenase (ARD) family. As to quaternary structure, monomer. Fe(2+) serves as cofactor. Ni(2+) is required as a cofactor.

The enzyme catalyses 1,2-dihydroxy-5-(methylsulfanyl)pent-1-en-3-one + O2 = 3-(methylsulfanyl)propanoate + CO + formate + 2 H(+). It catalyses the reaction 1,2-dihydroxy-5-(methylsulfanyl)pent-1-en-3-one + O2 = 4-methylsulfanyl-2-oxobutanoate + formate + 2 H(+). It functions in the pathway amino-acid biosynthesis; L-methionine biosynthesis via salvage pathway; L-methionine from S-methyl-5-thio-alpha-D-ribose 1-phosphate: step 5/6. Catalyzes 2 different reactions between oxygen and the acireductone 1,2-dihydroxy-3-keto-5-methylthiopentene (DHK-MTPene) depending upon the metal bound in the active site. Fe-containing acireductone dioxygenase (Fe-ARD) produces formate and 2-keto-4-methylthiobutyrate (KMTB), the alpha-ketoacid precursor of methionine in the methionine recycle pathway. Ni-containing acireductone dioxygenase (Ni-ARD) produces methylthiopropionate, carbon monoxide and formate, and does not lie on the methionine recycle pathway. This chain is Acireductone dioxygenase, found in Saccharopolyspora erythraea (strain ATCC 11635 / DSM 40517 / JCM 4748 / NBRC 13426 / NCIMB 8594 / NRRL 2338).